Consider the following 879-residue polypeptide: Bifunctional uridylyltransferase/uridylyl-removing enzyme (879 aa).

The segment at 1 to 340 is uridylyltransferase; sequence MANVQEDKDF…GTQDLQHAEH (340 aa). The uridylyl-removing stretch occupies residues 341-700; the sequence is ISDDFAVANK…IGDENNYGTT (360 aa). The region spanning 458 to 580 is the HD domain; the sequence is VDEHTFRLVR…VSTPERLDYL (123 aa). 2 consecutive ACT domains span residues 701-782 and 809-879; these read ELFI…STKR and TFEL…DLEF.

The protein belongs to the GlnD family. Mg(2+) is required as a cofactor.

The enzyme catalyses [protein-PII]-L-tyrosine + UTP = [protein-PII]-uridylyl-L-tyrosine + diphosphate. It carries out the reaction [protein-PII]-uridylyl-L-tyrosine + H2O = [protein-PII]-L-tyrosine + UMP + H(+). With respect to regulation, uridylyltransferase (UTase) activity is inhibited by glutamine, while glutamine activates uridylyl-removing (UR) activity. In terms of biological role, modifies, by uridylylation and deuridylylation, the PII regulatory proteins (GlnB and homologs), in response to the nitrogen status of the cell that GlnD senses through the glutamine level. Under low glutamine levels, catalyzes the conversion of the PII proteins and UTP to PII-UMP and PPi, while under higher glutamine levels, GlnD hydrolyzes PII-UMP to PII and UMP (deuridylylation). Thus, controls uridylylation state and activity of the PII proteins, and plays an important role in the regulation of nitrogen assimilation and metabolism. This is Bifunctional uridylyltransferase/uridylyl-removing enzyme from Idiomarina loihiensis (strain ATCC BAA-735 / DSM 15497 / L2-TR).